The sequence spans 320 residues: Esterase LipI (320 aa).

Catalysis depends on residues Ser165, Asp261, and His291.

Belongs to the 'GDXG' lipolytic enzyme family.

The enzyme catalyses a fatty acid ester + H2O = an aliphatic alcohol + a fatty acid + H(+). It catalyses the reaction a butanoate ester + H2O = an aliphatic alcohol + butanoate + H(+). It carries out the reaction an octanoate ester + H2O = an aliphatic alcohol + octanoate + H(+). The catalysed reaction is decanoate ester + H2O = decanoate + an aliphatic alcohol + H(+). The enzyme catalyses an acetyl ester + H2O = an aliphatic alcohol + acetate + H(+). It catalyses the reaction a dodecanoate ester + H2O = an aliphatic alcohol + dodecanoate + H(+). Its activity is regulated as follows. Inhibited by ionic detergents SDS (anions) and CTAB (cationic). Strongly inhibited by Zn(2+). Esterase that can hydrolyze short-chain esters with the carbon chain containing 2 to 12 carbon atoms. In vitro, pNP-butyrate is the preferred substrate. The polypeptide is Esterase LipI (Mycobacterium tuberculosis (strain ATCC 25618 / H37Rv)).